The sequence spans 432 residues: Phytase AppA (432 aa).

Residues 1–22 form the signal peptide; it reads MKAILIPFLSLLIPLTPQSAFA. 1D-myo-inositol hexakisphosphate is bound at residue Arg38. His39 serves as the catalytic Nucleophile. Residues 42–46 and Arg114 each bind 1D-myo-inositol hexakisphosphate; that span reads RAPTK. 4 disulfides stabilise this stretch: Cys99–Cys130, Cys155–Cys430, Cys200–Cys210, and Cys404–Cys413. 1D-myo-inositol hexakisphosphate contacts are provided by residues Arg289 and 325 to 327; that span reads HDT. Catalysis depends on Asp326, which acts as the Proton donor.

Belongs to the histidine acid phosphatase family. Monomer.

It is found in the periplasm. It catalyses the reaction 1D-myo-inositol hexakisphosphate + H2O = 1D-myo-inositol 1,2,3,4,5-pentakisphosphate + phosphate. The enzyme catalyses 1D-myo-inositol 1,2,3,4,5-pentakisphosphate + H2O = 1D-myo-inositol 2,3,4,5-tetrakisphosphate + phosphate. It carries out the reaction 1D-myo-inositol 2,3,4,5-tetrakisphosphate + H2O = 1D-myo-inositol 2,4,5-triphosphate + phosphate. The catalysed reaction is 1D-myo-inositol 2,4,5-triphosphate + H2O = 1D-myo-inositol 2,5-bisphosphate + phosphate. It catalyses the reaction 1D-myo-inositol 2,5-bisphosphate + H2O = 1D-myo-inositol 2-phosphate + phosphate. The enzyme catalyses GTP + H2O = GDP + phosphate + H(+). Its activity is regulated as follows. Contains three consecutive and one non-consecutive disulfide bonds and shows a strong dependence on DsbC for its full activity. Competitively inhibited by tartaric acid and by sodium fluorid. Functionally, catalyzes the hydrolysis of phytate (or myo-inositol hexakisphosphate, an indigestible organic form of phosphorus that is found in many plant tissues) to myo-inositol and inorganic phosphate. Dephosphorylates phytate in a stereospecific way by sequential removal of phosphate groups to produce myo-inositol 2-monophosphate. Also shows phosphoanhydride phosphatase activity and hydrolyzes the distal phosphoryl residues of GTP, the 5'-beta-phosphoryl residue of the regulatory nucleotide ppGpp and tripolyphosphates. Does not split most phosphomonoesters with the exception of the synthetic substrate p-nitrophenyl phosphate (pNPP), 2,3-bisphosphoglycerate and fructose 1,6-bisphosphate. The polypeptide is Phytase AppA (Escherichia coli (strain K12)).